Reading from the N-terminus, the 403-residue chain is Forkhead box protein Q1 (403 aa).

Disordered regions lie at residues 1 to 75 (MKLE…PGAE) and 94 to 116 (GAAG…PYTR). Low complexity predominate over residues 32–48 (LSAAGDDSLGSDGDCAA). Gly residues predominate over residues 96 to 107 (AGPGAGGAGSGE). Positions 119–214 (KPPYSYIALI…ADGVFRRRRK (96 aa)) form a DNA-binding region, fork-head. Positions 216 to 266 (LSHRAPVPAPGLRPEEAPGLPAAPPPAPAAPASPRMRSPARQEERASPAGK) are disordered. Residues 236–246 (PAAPPPAPAAP) are compositionally biased toward pro residues.

Expressed predominantly in the stomach, trachea, bladder and salivary gland.

The protein resides in the nucleus. In terms of biological role, plays a role in hair follicle differentiation. This is Forkhead box protein Q1 (FOXQ1) from Homo sapiens (Human).